The following is a 266-amino-acid chain: 5'-nucleotidase SurE (266 aa).

Positions 8, 9, 39, and 95 each coordinate a divalent metal cation.

This sequence belongs to the SurE nucleotidase family. Requires a divalent metal cation as cofactor.

The protein localises to the cytoplasm. The enzyme catalyses a ribonucleoside 5'-phosphate + H2O = a ribonucleoside + phosphate. Functionally, nucleotidase that shows phosphatase activity on nucleoside 5'-monophosphates. This chain is 5'-nucleotidase SurE, found in Syntrophus aciditrophicus (strain SB).